The sequence spans 303 residues: UDP-N-acetylenolpyruvoylglucosamine reductase (303 aa).

An FAD-binding PCMH-type domain is found at 30–196; it reads IGGPADLLII…LEAVFKLKQD (167 aa). The active site involves arginine 174. The active-site Proton donor is the serine 225. Residue glutamate 295 is part of the active site.

This sequence belongs to the MurB family. FAD is required as a cofactor.

Its subcellular location is the cytoplasm. The catalysed reaction is UDP-N-acetyl-alpha-D-muramate + NADP(+) = UDP-N-acetyl-3-O-(1-carboxyvinyl)-alpha-D-glucosamine + NADPH + H(+). The protein operates within cell wall biogenesis; peptidoglycan biosynthesis. In terms of biological role, cell wall formation. This Bacillus pumilus (strain SAFR-032) protein is UDP-N-acetylenolpyruvoylglucosamine reductase.